A 539-amino-acid chain; its full sequence is Phosphoenolpyruvate carboxykinase (ATP) (539 aa).

Positions 64, 206, and 212 each coordinate substrate. ATP is bound by residues Lys212, His231, and 247–255 (GLSGTGKTT). Mn(2+) is bound by residues Lys212 and His231. Residue Asp268 coordinates Mn(2+). ATP-binding positions include Glu296, Arg332, 448–449 (RI), and Thr454. Residue Arg332 coordinates substrate.

It belongs to the phosphoenolpyruvate carboxykinase (ATP) family. As to quaternary structure, monomer. Requires Mn(2+) as cofactor.

Its subcellular location is the cytoplasm. The catalysed reaction is oxaloacetate + ATP = phosphoenolpyruvate + ADP + CO2. It functions in the pathway carbohydrate biosynthesis; gluconeogenesis. Functionally, involved in the gluconeogenesis. Catalyzes the conversion of oxaloacetate (OAA) to phosphoenolpyruvate (PEP) through direct phosphoryl transfer between the nucleoside triphosphate and OAA. In Hamiltonella defensa subsp. Acyrthosiphon pisum (strain 5AT), this protein is Phosphoenolpyruvate carboxykinase (ATP).